The sequence spans 640 residues: DNA mismatch repair protein MutL (640 aa).

The interval threonine 343–proline 389 is disordered. The segment covering glutamine 350–histidine 373 has biased composition (basic and acidic residues).

It belongs to the DNA mismatch repair MutL/HexB family.

In terms of biological role, this protein is involved in the repair of mismatches in DNA. It is required for dam-dependent methyl-directed DNA mismatch repair. May act as a 'molecular matchmaker', a protein that promotes the formation of a stable complex between two or more DNA-binding proteins in an ATP-dependent manner without itself being part of a final effector complex. This is DNA mismatch repair protein MutL from Desulforamulus reducens (strain ATCC BAA-1160 / DSM 100696 / MI-1) (Desulfotomaculum reducens).